The chain runs to 625 residues: Phosphomethylpyrimidine synthase (625 aa).

Substrate contacts are provided by residues asparagine 230, methionine 259, tyrosine 288, histidine 324, 344 to 346 (SRG), 385 to 388 (DGLR), and glutamate 424. Residue histidine 428 participates in Zn(2+) binding. A substrate-binding site is contributed by tyrosine 451. Residue histidine 492 participates in Zn(2+) binding. Residues cysteine 572, cysteine 575, and cysteine 580 each contribute to the [4Fe-4S] cluster site.

It belongs to the ThiC family. In terms of assembly, homodimer. Requires [4Fe-4S] cluster as cofactor.

It catalyses the reaction 5-amino-1-(5-phospho-beta-D-ribosyl)imidazole + S-adenosyl-L-methionine = 4-amino-2-methyl-5-(phosphooxymethyl)pyrimidine + CO + 5'-deoxyadenosine + formate + L-methionine + 3 H(+). Its pathway is cofactor biosynthesis; thiamine diphosphate biosynthesis. Functionally, catalyzes the synthesis of the hydroxymethylpyrimidine phosphate (HMP-P) moiety of thiamine from aminoimidazole ribotide (AIR) in a radical S-adenosyl-L-methionine (SAM)-dependent reaction. The polypeptide is Phosphomethylpyrimidine synthase (Xanthomonas euvesicatoria pv. vesicatoria (strain 85-10) (Xanthomonas campestris pv. vesicatoria)).